We begin with the raw amino-acid sequence, 344 residues long: Dihydroorotate dehydrogenase (quinone) (344 aa).

FMN contacts are provided by residues 65–69 (AGFDK) and T89. K69 contacts substrate. 114–118 (NRMGF) contacts substrate. Residues N145 and N178 each contribute to the FMN site. N178 lines the substrate pocket. The active-site Nucleophile is S181. N183 is a binding site for substrate. 2 residues coordinate FMN: K215 and T243. 244-245 (NT) contacts substrate. Residues G269, G298, and 319-320 (YT) contribute to the FMN site.

It belongs to the dihydroorotate dehydrogenase family. Type 2 subfamily. In terms of assembly, monomer. The cofactor is FMN.

Its subcellular location is the cell membrane. The enzyme catalyses (S)-dihydroorotate + a quinone = orotate + a quinol. It participates in pyrimidine metabolism; UMP biosynthesis via de novo pathway; orotate from (S)-dihydroorotate (quinone route): step 1/1. Its function is as follows. Catalyzes the conversion of dihydroorotate to orotate with quinone as electron acceptor. This chain is Dihydroorotate dehydrogenase (quinone), found in Clavibacter michiganensis subsp. michiganensis (strain NCPPB 382).